We begin with the raw amino-acid sequence, 245 residues long: MVKPKYSRVLIKLSGEALAGEKGVGIDIPTVQTIAQEIKEVHDSGIEIALVIGGGNLWRGEPASKAGMDRVQADYTGMLGTVMNALVMADALQHAGVDTRVQTAIAMQQVAEPYIRGRALRHLQKGRIVIFAAGVGSPYFSTDTTSALRAAEIEADAILMAKNGVDGVYNDDPRKNADAIKFNELTHMEVLKRGLKIMDSTASSLSMDNDIDLVVFNLNESGNIKRVIFGEQIGTTVTSRISDSE.

Residue Lys12–Gly15 participates in ATP binding. Residues Gly20 to Gly25 form an involved in allosteric activation by GTP region. UMP is bound at residue Gly54. Gly55 and Arg59 together coordinate ATP. UMP-binding positions include Asp74 and Val135 to Thr142. ATP contacts are provided by Asn163, Tyr169, and Asp172.

Belongs to the UMP kinase family. As to quaternary structure, homohexamer.

The protein resides in the cytoplasm. The catalysed reaction is UMP + ATP = UDP + ADP. The protein operates within pyrimidine metabolism; CTP biosynthesis via de novo pathway; UDP from UMP (UMPK route): step 1/1. Its activity is regulated as follows. Allosterically activated by GTP. Inhibited by UTP. In terms of biological role, catalyzes the reversible phosphorylation of UMP to UDP. The polypeptide is Uridylate kinase (Streptococcus mutans serotype c (strain ATCC 700610 / UA159)).